Reading from the N-terminus, the 188-residue chain is Elongation factor P (188 aa).

At Lys34 the chain carries N6-(3,6-diaminohexanoyl)-5-hydroxylysine.

This sequence belongs to the elongation factor P family. May be beta-lysylated on the epsilon-amino group of Lys-34 by the combined action of EpmA and EpmB, and then hydroxylated on the C5 position of the same residue by EpmC (if this protein is present). Lysylation is critical for the stimulatory effect of EF-P on peptide-bond formation. The lysylation moiety may extend toward the peptidyltransferase center and stabilize the terminal 3-CCA end of the tRNA. Hydroxylation of the C5 position on Lys-34 may allow additional potential stabilizing hydrogen-bond interactions with the P-tRNA.

Its subcellular location is the cytoplasm. It participates in protein biosynthesis; polypeptide chain elongation. Involved in peptide bond synthesis. Alleviates ribosome stalling that occurs when 3 or more consecutive Pro residues or the sequence PPG is present in a protein, possibly by augmenting the peptidyl transferase activity of the ribosome. Modification of Lys-34 is required for alleviation. The chain is Elongation factor P from Pasteurella multocida (strain Pm70).